The chain runs to 92 residues: Ferredoxin-like protein in nif region (92 aa).

4Fe-4S ferredoxin-type domains are found at residues 2–28 (ALKI…SLAG) and 29–65 (PHFE…LADG). Cys-9, Cys-12, Cys-15, Cys-19, Cys-38, Cys-41, Cys-50, and Cys-54 together coordinate [4Fe-4S] cluster.

Requires [4Fe-4S] cluster as cofactor.

Ferredoxins are iron-sulfur proteins that transfer electrons in a wide variety of metabolic reactions. This Azotobacter vinelandii protein is Ferredoxin-like protein in nif region.